The sequence spans 502 residues: MTGQRTQHVHFLGIGGSGLSPLAQIHLAGGGTVSGSDSEDSPRVATLRARGVPIRIGATPGPAAFAAELAGADVVVASSALPDDHPEIVAARALGLPVRRRSEWLPELTAGYRLVAVAGSHGKSTTSAMLTLVLRAAGLDPTAVIGAEVSQLGGNALAGSGDVFVLESDEYGGAFAGLDPSIAVITNVEWEHPDVFPDEASVRTAFAAFARRVRPGGRLVVCGDHPGVVAVLTELGRQRPGNDVAVNDVAVIDYGFGAERHWRAVDVVTTAGDDMTRATVLRAGQEIGALTLTVPGRHSVLNALAVLATATELGVAPAQTLTTLTTFTGAARRFEFVGFWNGPADSTGVGPAGGPGSLEVIDDYAHHPTEVRLTLAAARSRARGRQIWTVLQPHTFSRFAALLDDFAAAFSDADRVYVTDIYAARETDDLGLHAVDLVKRVSEPAATYYVSWPELVERLATDVRVTLSDEASRGILLLTLGAGTITTVGPRLLAALGFSAAG.

ATP is bound at residue 119–125 (GSHGKST).

Belongs to the MurCDEF family.

It is found in the cytoplasm. The catalysed reaction is UDP-N-acetyl-alpha-D-muramate + L-alanine + ATP = UDP-N-acetyl-alpha-D-muramoyl-L-alanine + ADP + phosphate + H(+). It functions in the pathway cell wall biogenesis; peptidoglycan biosynthesis. Its function is as follows. Cell wall formation. The chain is UDP-N-acetylmuramate--L-alanine ligase from Frankia casuarinae (strain DSM 45818 / CECT 9043 / HFP020203 / CcI3).